Consider the following 87-residue polypeptide: UPF0250 protein SG0794 (87 aa).

Belongs to the UPF0250 family.

The polypeptide is UPF0250 protein SG0794 (Sodalis glossinidius (strain morsitans)).